We begin with the raw amino-acid sequence, 206 residues long: Outer-membrane lipoprotein LolB (206 aa).

Positions 1 to 21 (MHERNYAVFRLLPLASLLLAA) are cleaved as a signal peptide. A lipid anchor (N-palmitoyl cysteine) is attached at Cys22. A lipid anchor (S-diacylglycerol cysteine) is attached at Cys22.

Belongs to the LolB family. As to quaternary structure, monomer.

It is found in the cell outer membrane. Plays a critical role in the incorporation of lipoproteins in the outer membrane after they are released by the LolA protein. This chain is Outer-membrane lipoprotein LolB, found in Sodalis glossinidius (strain morsitans).